A 372-amino-acid polypeptide reads, in one-letter code: Phospho-N-acetylmuramoyl-pentapeptide-transferase (372 aa).

10 helical membrane passes run 25–45 (RSLL…PIMI), 73–93 (TMGG…WADL), 98–118 (VWIV…DDWI), 134–154 (FFWT…IATQ), 176–196 (SIPL…YLVI), 211–231 (GLAI…AYLS), 251–271 (LVVI…YNAH), 275–295 (VFMG…IAVM), 300–320 (IVFA…FLQI), and 349–369 (QVVI…LMTL).

It belongs to the glycosyltransferase 4 family. MraY subfamily. Mg(2+) serves as cofactor.

It is found in the cell inner membrane. It carries out the reaction UDP-N-acetyl-alpha-D-muramoyl-L-alanyl-gamma-D-glutamyl-meso-2,6-diaminopimeloyl-D-alanyl-D-alanine + di-trans,octa-cis-undecaprenyl phosphate = di-trans,octa-cis-undecaprenyl diphospho-N-acetyl-alpha-D-muramoyl-L-alanyl-D-glutamyl-meso-2,6-diaminopimeloyl-D-alanyl-D-alanine + UMP. Its pathway is cell wall biogenesis; peptidoglycan biosynthesis. Catalyzes the initial step of the lipid cycle reactions in the biosynthesis of the cell wall peptidoglycan: transfers peptidoglycan precursor phospho-MurNAc-pentapeptide from UDP-MurNAc-pentapeptide onto the lipid carrier undecaprenyl phosphate, yielding undecaprenyl-pyrophosphoryl-MurNAc-pentapeptide, known as lipid I. This chain is Phospho-N-acetylmuramoyl-pentapeptide-transferase, found in Acinetobacter baumannii (strain AB0057).